A 753-amino-acid polypeptide reads, in one-letter code: Pumilio homolog 23 (753 aa).

The interval 1–84 (MVSVGSKSLP…SEFEHQNQFV (84 aa)) is disordered. Composition is skewed to basic and acidic residues over residues 23 to 38 (MGERGKSSNNHSERNK), 47 to 57 (GNRGFDVDSSK), and 73 to 84 (KHSEFEHQNQFV). Pumilio repeat units follow at residues 123–158 (ETRGREYEIATDYIISHVLQTLLEGCELDQLCSFIR), 159–198 (NSASVFPAIAMDRSGSHVAESALKSLATHLENPDAYSVIE), 206–244 (KVIVDNPLDMMCNCYGSHVLRRLLCLCKGVSLDSPELYG), 284–325 (GLLS…EIIP), 345–380 (NVAKEILESMKDNSFSHLVEVILEVAPESLYNEMFN), 381–418 (KVFKNSLFELSVDRCANFVIQALISHARDQEQMGIMWE), 526–563 (SMKAEYITETAKDSSGARVIEAFLASDAATKQKRRLII), and 564–599 (KLRGHFGELSLHTSGSFTVEKCFDACNLTLREAIAS). The 354-residue stretch at 322 to 675 (EIIPLILRCN…DASEDAAQEI (354 aa)) folds into the PUM-HD domain. Composition is skewed to basic and acidic residues over residues 677–688 (VKNTRKEIDHHP), 699–712 (HAKDKDEPFAGEKR), and 719–728 (KTSEATDKPK). The tract at residues 677–753 (VKNTRKEIDH…KNRHSNKMRI (77 aa)) is disordered. Residues 744-753 (KNRHSNKMRI) are compositionally biased toward basic residues.

Its subcellular location is the nucleus. The protein resides in the nucleolus. In terms of biological role, sequence-specific RNA-binding protein that regulates translation and mRNA stability by binding the 3'-UTR of target mRNAs. In Arabidopsis thaliana (Mouse-ear cress), this protein is Pumilio homolog 23 (APUM23).